The sequence spans 180 residues: UPF0340 protein LACR_0494 (180 aa).

It belongs to the UPF0340 family.

The sequence is that of UPF0340 protein LACR_0494 from Lactococcus lactis subsp. cremoris (strain SK11).